The primary structure comprises 659 residues: Endoglucanase A (659 aa).

Residues 1–500 (MLIFETYLIL…SKLPNFPPKE (500 aa)) are catalytic. Aspartate 101 functions as the Nucleophile in the catalytic mechanism. The disordered stretch occupies residues 413-433 (NSPKHPHHRTAHGSWSNQLTN). Active-site residues include histidine 419, aspartate 457, and glutamate 466. The region spanning 501 to 658 (QVEDEFFVEA…GVLVFGTLPD (158 aa)) is the CBM3 domain.

This sequence belongs to the glycosyl hydrolase 9 (cellulase E) family.

It localises to the secreted. It catalyses the reaction Endohydrolysis of (1-&gt;4)-beta-D-glucosidic linkages in cellulose, lichenin and cereal beta-D-glucans.. Strongly inhibited by ZnCl(2) and by EDTA. Its function is as follows. Active on carboxymethyl cellulose and carboxymethyl cellulose-RBB but not avicel, xanthan gum, carboxymethyl-curdulan-RBB or carboxymethyl-xylan-RBB. In Bacillus pumilus (Bacillus mesentericus), this protein is Endoglucanase A (eglA).